A 208-amino-acid chain; its full sequence is uncharacterized protein (208 aa).

This is an uncharacterized protein from Saccharum officinarum (Sugarcane).